A 568-amino-acid polypeptide reads, in one-letter code: Cytochrome P450 monooxygenase 41 (568 aa).

Residues 21–41 (LTSLVPLILSVMVCLIATVTI) form a helical membrane-spanning segment. Residues N321 and N377 are each glycosylated (N-linked (GlcNAc...) asparagine). C514 lines the heme pocket.

It belongs to the cytochrome P450 family. Heme serves as cofactor.

It localises to the membrane. It functions in the pathway secondary metabolite biosynthesis. Its function is as follows. Cytochrome P450 monooxygenase that is able to use 3,5-dimethoxy-trans-stilbene and 3,5,4'-trimethoxy-trans-stilbene as substrates for oxidation. The sequence is that of Cytochrome P450 monooxygenase 41 from Postia placenta (strain ATCC 44394 / Madison 698-R) (Brown rot fungus).